A 338-amino-acid chain; its full sequence is Plasminogen (338 aa).

The region spanning 9 to 88 is the Kringle 5 domain; that stretch reads CMLGIGKGYQ…LFDYCDVPQC (80 aa). 9 disulfides stabilise this stretch: cysteine 9–cysteine 88, cysteine 30–cysteine 71, cysteine 59–cysteine 83, cysteine 95–cysteine 213, cysteine 105–cysteine 113, cysteine 135–cysteine 151, cysteine 227–cysteine 294, cysteine 257–cysteine 273, and cysteine 284–cysteine 312. Residues 109 to 336 enclose the Peptidase S1 domain; it reads IVGGCVAIAH…FINWIERIMQ (228 aa). Serine 125 is modified (phosphoserine). Residues histidine 150 and aspartate 193 each act as charge relay system in the active site. Serine 288 (charge relay system) is an active-site residue.

The protein belongs to the peptidase S1 family. Plasminogen subfamily. Interacts with CSPG4 and AMOT. Interacts (via the Kringle domains) with HRG; the interaction tethers PLG to the cell surface and enhances its activation. Interacts (via Kringle 4 domain) with ADA; the interaction stimulates PLG activation when in complex with DPP4. Angiostatin: Interacts with ATP5F1A; the interaction inhibits most of the angiogenic effects of angiostatin.

It localises to the secreted. The catalysed reaction is Preferential cleavage: Lys-|-Xaa &gt; Arg-|-Xaa, higher selectivity than trypsin. Converts fibrin into soluble products.. Converted into plasmin by plasminogen activators, both plasminogen and its activator being bound to fibrin. Activated with catalytic amounts of streptokinase. Plasmin dissolves the fibrin of blood clots and acts as a proteolytic factor in a variety of other processes including embryonic development, tissue remodeling, tumor invasion, and inflammation. In ovulation, weakens the walls of the Graafian follicle. It activates the urokinase-type plasminogen activator, collagenases and several complement zymogens, such as C1, C4 and C5. Cleavage of fibronectin and laminin leads to cell detachment and apoptosis. Also cleaves fibrin, thrombospondin and von Willebrand factor. Its role in tissue remodeling and tumor invasion may be modulated by CSPG4. Binds to cells. This chain is Plasminogen (PLG), found in Equus caballus (Horse).